The chain runs to 624 residues: Plastin-2 (624 aa).

2 consecutive EF-hand domains span residues 9–44 (EEME…ANLP) and 49–84 (RVRE…LKSS). Ca(2+) contacts are provided by Asp-22, Asp-24, Asn-26, His-28, Glu-33, Asp-62, Asn-64, Asp-66, Lys-68, and Glu-73. Calponin-homology (CH) domains lie at 118–234 (EEEK…KIGL), 262–373 (LSPE…NKYP), 392–501 (TREE…RRYT), and 513–621 (KIID…ARGM). Actin-binding regions lie at residues 118 to 373 (EEEK…NKYP) and 392 to 621 (TREE…ARGM).

In terms of assembly, monomer. Expressed by macrophages (at protein level).

Its subcellular location is the cytoplasm. It localises to the cytoskeleton. The protein resides in the cell junction. The protein localises to the cell projection. It is found in the ruffle membrane. Actin-binding protein. Plays a role in the activation of T-cells. The sequence is that of Plastin-2 from Danio rerio (Zebrafish).